The sequence spans 261 residues: 3beta-hydroxysteroid dehydrogenase 1 (261 aa).

Residues 65-66 (DV), N92, Y158, and K162 each bind NAD(+). Y158 functions as the Proton acceptor in the catalytic mechanism.

Belongs to the short-chain dehydrogenases/reductases (SDR) family.

The enzyme catalyses 3-oxo-5beta-cholan-24-oate + NADH + H(+) = isolithocholate + NAD(+). The catalysed reaction is 12alpha-hydroxy-3-oxo-5beta-cholan-24-oate + NADH + H(+) = isodeoxycholate + NAD(+). It carries out the reaction 7alpha,12alpha-dihydroxy-3-oxo-5beta-cholan-24-oate + NADH + H(+) = isocholate + NAD(+). It catalyses the reaction 3-oxochenodeoxycholate + NADH + H(+) = isochenodeoxycholate + NAD(+). Its function is as follows. Involved in the modification of secondary bile acids into iso-bile acids (3beta-bile acids) via epimerization of the 3-OH group through a 3-oxo-intermediate. Catalyzes the reduction of 12-alpha-hydroxy-3-oxo-5-beta-cholan-24-oate (3-oxo-DCA) and 3-oxo-5-beta-cholan-24-oate (3-oxo-LCA) to yield isodeoxycholate (isoDCA) and isolithocholate (isoLCA), respectively. Is also able to catalyze the reduction of 3-dehydrocholate (3-oxo-CA or 7alpha,12alpha-dihydroxy-3-oxo-5beta-cholan-24-oate) and 7-alpha-hydroxy-3-oxo-5-beta-cholan-24-oate (3-oxo-CDCA), into isocholate (isoCA) and isochenodeoxycholate (isoCDCA), respectively. Prefers NADH to NADPH as cosubstrate. The conversion of the abundant bile acid deoxycholate (DCA) into isoDCA by the gut bacterium E.lenta favors the growth of the keystone commensal genus Bacteroides, since isoDCA is less cytotoxic than its parent compound, DCA; iso-bile acids have thus a potential role in modulating gut community composition. The protein is 3beta-hydroxysteroid dehydrogenase 1 of Eggerthella lenta (strain ATCC 25559 / DSM 2243 / CCUG 17323 / JCM 9979 / KCTC 3265 / NCTC 11813 / VPI 0255 / 1899 B) (Eubacterium lentum).